A 157-amino-acid polypeptide reads, in one-letter code: MTDAQGFDALASLSSNPEAAAPAEPKIDAQGRAYATGKRKNAIARVWIKPGKGSITINGRDQEVYFARPVLRMMIAQPLEVTDRLGQFDVVVTVEGSGLSGQAGAIRHGLSKALTYYEPGLRPVLKPHGFLTRDSRVVERKKYGKAKARRSFQFSKR.

This sequence belongs to the universal ribosomal protein uS9 family.

The sequence is that of Small ribosomal subunit protein uS9 from Caulobacter vibrioides (strain ATCC 19089 / CIP 103742 / CB 15) (Caulobacter crescentus).